Consider the following 209-residue polypeptide: Redox-sensing transcriptional repressor Rex (209 aa).

Positions 16 to 55 (LYYRFIQNLSLSGKQRVSSAELSEAVKVDSATIRRDFSYF) form a DNA-binding region, H-T-H motif. Position 90-95 (90-95 (GVGNLG)) interacts with NAD(+).

The protein belongs to the transcriptional regulatory Rex family. In terms of assembly, homodimer.

It localises to the cytoplasm. Its function is as follows. Modulates transcription in response to changes in cellular NADH/NAD(+) redox state. The chain is Redox-sensing transcriptional repressor Rex from Bacillus mycoides (strain KBAB4) (Bacillus weihenstephanensis).